The sequence spans 814 residues: MEATKTDLRLLLECLKYQMKWPGSQKQALLTIISICKQNDQYVEFLREIGGISFIYNLSKSSTFSQVKETALFTLASLAELHESCKQALCREEMFRDFVQHLEQEMPLTEKRVAVYMLSVLVANNRCGQTLAKTSRCIEALLRLFRQSFPVPGESYEQLQLWITVSSALCGSVNNPQNEENQNVCMSVFPEIKPWLQEVALPRAELAQPLCSFIGMTVANNPCAQEYFVSVGGLDSLSDTLTRVLSQSTHSASVCKMATIITKTLSACISNNELLGSSLSKLRVIPGLLRLLSSPNLDPQDQLAVVLTTGHLTDACVEQQSQLLSAGGLPIIITLLTETSDEELKKAAIFVLHTCNRITESLGPGMSTIDPNECDREGQWRSAGQILQRIQLLEKKIGKKLWERDPESQPHSMKRSDSHVECDDELWEGSVMRKVKGNHRVYGEFRAIPAGTPITSEILQDQDSLQPDSSEEGLSPVQVNLFKGPNWEKSKKRKHKQKRENERSDNQETRREGVNKRELKRNVKSERVVKRLKMMNLESDDDGYELLQNCSTPTEGNRDTQGPDIFRHPDPVKRNQREPSLSDDNMSLCTELLDKEINKFLKPPSASKSNTLRCAGCVKHMNELNSRSFGAVLSSCRFQCDFHLTLREAEDRFRRSQPLKRTSHTPTHTHINTHRKIREHSTSAQEHKQKSKREKHKLSHQSSDRCYRLTPLRRPRETYSPDVKQWTDHRHLKKSSEDARSKNSSGRHRKRQNWSDKELCYLTKGVKRFGHSWNTILWKYPFHPGRTNVDLAKKFYHMQKAKAQGVDLSVAKAL.

ARM repeat units follow at residues 93–136 (EMFR…KTSR) and 327–368 (GGLP…GMST). Disordered stretches follow at residues 461–521 (DQDS…ELKR), 551–584 (STPT…LSDD), and 653–753 (FRRS…KRQN). Residues 488–512 (EKSKKRKHKQKRENERSDNQETRRE) are a coiled coil. Composition is skewed to basic and acidic residues over residues 499 to 521 (RENE…ELKR), 565 to 577 (IFRH…RNQR), and 679 to 688 (EHSTSAQEHK). A compositionally biased stretch (basic residues) spans 689–699 (QKSKREKHKLS). Positions 714–741 (RPRETYSPDVKQWTDHRHLKKSSEDARS) are enriched in basic and acidic residues. One can recognise a Myb-like domain in the interval 746–799 (GRHRKRQNWSDKELCYLTKGVKRFGHSWNTILWKYPFHPGRTNVDLAKKFYHMQ).

The protein belongs to the TERB1 family. As to quaternary structure, component of the MAJIN-TERB1-TERB2 complex.

It is found in the chromosome. It localises to the telomere. Its subcellular location is the nucleus inner membrane. In terms of biological role, meiosis-specific telomere-associated protein involved in meiotic telomere attachment to the nucleus inner membrane, a crucial step for homologous pairing and synapsis. Component of the MAJIN-TERB1-TERB2 complex, which promotes telomere cap exchange by mediating attachment of telomeric DNA to the inner nuclear membrane and replacement of the protective cap of telomeric chromosomes: in early meiosis, the MAJIN-TERB1-TERB2 complex associates with telomeric DNA and the shelterin/telosome complex. During prophase, the complex matures and promotes release of the shelterin/telosome complex from telomeric DNA. In the MAJIN-TERB1-TERB2 complex, TERB1 probably mediates association with the shelterin/telosome complex. This chain is Telomere repeats-binding bouquet formation protein 1 (ccdc79), found in Danio rerio (Zebrafish).